Consider the following 230-residue polypeptide: Orotidine 5'-phosphate decarboxylase (230 aa).

Substrate-binding positions include D12, K34, 61-70 (DMKLLDIDNT), T116, R177, Q186, and R207. K63 (proton donor) is an active-site residue.

Belongs to the OMP decarboxylase family. Type 1 subfamily. As to quaternary structure, homodimer.

It catalyses the reaction orotidine 5'-phosphate + H(+) = UMP + CO2. It participates in pyrimidine metabolism; UMP biosynthesis via de novo pathway; UMP from orotate: step 2/2. Functionally, catalyzes the decarboxylation of orotidine 5'-monophosphate (OMP) to uridine 5'-monophosphate (UMP). This is Orotidine 5'-phosphate decarboxylase from Rhizobium rhizogenes (strain K84 / ATCC BAA-868) (Agrobacterium radiobacter).